Here is an 86-residue protein sequence, read N- to C-terminus: Anti-adapter protein IraP (86 aa).

Residues 1–36 (MKNLIAELLLKLAQKEEESKELVAQVEALEIIVTAM) are a coiled coil.

This sequence belongs to the IraP family. In terms of assembly, interacts with RssB.

The protein localises to the cytoplasm. Functionally, inhibits RpoS proteolysis by regulating RssB activity, thereby increasing the stability of the sigma stress factor RpoS especially during phosphate and magnesium starvation, but also in stationary phase and during nitrogen starvation. Its effect on RpoS stability is due to its interaction with RssB, which probably blocks the interaction of RssB with RpoS, and the consequent delivery of the RssB-RpoS complex to the ClpXP protein degradation pathway. The polypeptide is Anti-adapter protein IraP (Salmonella choleraesuis (strain SC-B67)).